Consider the following 254-residue polypeptide: MTNSGKTGGKSGKGGTGGARALKVRVKTARKRSNSSTRWLQRQLNDPYVHAAKREGYRSRAAFKLAEIDDKYRFLKPGGRVVDLGCAPGGWCQVAVARVKAEGGDAGAEGRHGRVIGLDYLEMDPVPGATILQLDFLSEGADDQVKELLAGEADVVLSDMAAPTTGHKQTDHMRIMSLCEIAAHFATEVLAPGGTFLAKVLRGGTENELLVLLKQHFKTVRHVKPKASRADSAEMYVLAQGFKGRSESPLDDAE.

Residues 1–18 are compositionally biased toward gly residues; the sequence is MTNSGKTGGKSGKGGTGG. The tract at residues 1–26 is disordered; the sequence is MTNSGKTGGKSGKGGTGGARALKVRV. Residues Gly89, Trp91, Asp119, Asp135, and Asp159 each contribute to the S-adenosyl-L-methionine site. Catalysis depends on Lys199, which acts as the Proton acceptor.

It belongs to the class I-like SAM-binding methyltransferase superfamily. RNA methyltransferase RlmE family.

The protein localises to the cytoplasm. It carries out the reaction uridine(2552) in 23S rRNA + S-adenosyl-L-methionine = 2'-O-methyluridine(2552) in 23S rRNA + S-adenosyl-L-homocysteine + H(+). In terms of biological role, specifically methylates the uridine in position 2552 of 23S rRNA at the 2'-O position of the ribose in the fully assembled 50S ribosomal subunit. The chain is Ribosomal RNA large subunit methyltransferase E from Parvibaculum lavamentivorans (strain DS-1 / DSM 13023 / NCIMB 13966).